The sequence spans 240 residues: MEDDWEALAEQKAEQLFAKADVNKWAGEDEDDVKDNWEDDDEEEEKKDAPKQEDTPTKNAKPKKAAQQKKLKKEDLERLQREEEEFANMTPEQQLAEKRRLQKLQEENDLKTAMETLGITPMSTGNGIDGMHPTTKEEFTELAEAISKKLANYRASTEYQGFLEELLLKLFASLSSNNIRKAKTTLDNLYLEKQKVEKGDKPKKTKGIKVKAKLRVEGENTTLNEYETKYDDYDDYDDFM.

The segment at 19–95 is disordered; the sequence is KADVNKWAGE…FANMTPEQQL (77 aa). The span at 28 to 45 shows a compositional bias: acidic residues; the sequence is EDEDDVKDNWEDDDEEEE. Basic and acidic residues predominate over residues 46–56; that stretch reads KKDAPKQEDTP. The span at 60–71 shows a compositional bias: basic residues; that stretch reads AKPKKAAQQKKL. Coiled-coil stretches lie at residues 63–90 and 176–235; these read KKAA…ANMT and SNNI…DYDD. A compositionally biased stretch (basic and acidic residues) spans 72–81; the sequence is KKEDLERLQR.

Belongs to the eIF-3 subunit J family. Component of the eukaryotic translation initiation factor 3 (eIF-3) complex.

It localises to the cytoplasm. Component of the eukaryotic translation initiation factor 3 (eIF-3) complex, which is involved in protein synthesis of a specialized repertoire of mRNAs and, together with other initiation factors, stimulates binding of mRNA and methionyl-tRNAi to the 40S ribosome. The eIF-3 complex specifically targets and initiates translation of a subset of mRNAs involved in cell proliferation. This chain is Eukaryotic translation initiation factor 3 subunit J, found in Anopheles gambiae (African malaria mosquito).